The chain runs to 589 residues: Vesicular glutamate transporter 3 (589 aa).

Topologically, residues 1 to 76 (MPFKAFDTFK…CHCCGLPKRY (76 aa)) are cytoplasmic. Positions 40–49 (TEEEDNIELN) are enriched in acidic residues. The disordered stretch occupies residues 40–61 (TEEEDNIELNEEGRPVQTSRPS). The chain crosses the membrane as a helical span at residues 77 to 97 (IIAIMSGLGFCISFGIRCNLG). Residues 98 to 130 (VAIVEMVNNSTVYVDGKPEIQTAQFNWDPETVG) are Vesicular-facing. N-linked (GlcNAc...) asparagine glycosylation is present at N106. Residues 131 to 151 (LIHGSFFWGYIMTQIPGGFIS) traverse the membrane as a helical segment. Over 152–153 (NK) the chain is Cytoplasmic. A helical transmembrane segment spans residues 154-174 (FAANRVFGAAIFLTSTLNMFI). Residues 175 to 182 (PSAARVHY) are Vesicular-facing. The chain crosses the membrane as a helical span at residues 183-203 (GCVMCVRILQGLVEGVTYPAC). The Cytoplasmic segment spans residues 204–221 (HGMWSKWAPPLERSRLAT). A helical membrane pass occupies residues 222–242 (TSFCGSYAGAVVAMPLAGVLV). Topologically, residues 243-249 (QYIGWSS) are vesicular. A helical membrane pass occupies residues 250–270 (VFYIYGMFGIIWYMFWLLQAY). Over 271–314 (ECPAAHPTISNEEKTYIETSIGEGANVVSLSKFSTPWKRFFTSL) the chain is Cytoplasmic. Residues 315–335 (PVYAIIVANFCRSWTFYLLLI) form a helical membrane-spanning segment. At 336 to 353 (SQPAYFEEVFGFAISKVG) the chain is on the vesicular side. A helical membrane pass occupies residues 354–374 (LLSAVPHMVMTIVVPIGGQLA). Topologically, residues 375–390 (DYLRSRQILTTTAVRK) are cytoplasmic. Residues 391-411 (IMNCGGFGMEATLLLVVGFSH) traverse the membrane as a helical segment. Residues 412-413 (TK) are Vesicular-facing. The helical transmembrane segment at 414-434 (GVAISFLVLAVGFSGFAISGF) threads the bilayer. The Cytoplasmic segment spans residues 435 to 447 (NVNHLDIAPRYAS). A helical membrane pass occupies residues 448–468 (ILMGISNGVGTLSGMVCPLIV). Topologically, residues 469–481 (GAMTRHKTREEWQ) are vesicular. The helical transmembrane segment at 482–502 (NVFLIAALVHYSGVIFYGVFA) threads the bilayer. The Cytoplasmic segment spans residues 503–586 (SGEKQEWADP…SYQNEERNFS (84 aa)). The tract at residues 559–589 (KKEWKGQRGATLDEEELTSYQNEERNFSTIS) is disordered. Residues 580-589 (NEERNFSTIS) show a composition bias toward basic and acidic residues.

The protein belongs to the major facilitator superfamily. Sodium/anion cotransporter family. VGLUT subfamily. Expressed in amygdala, cerebellum, hippocampus, medulla, spinal cord and thalamus.

Its subcellular location is the cytoplasmic vesicle. It is found in the secretory vesicle. The protein localises to the synaptic vesicle membrane. It localises to the cell membrane. The protein resides in the synapse. Its subcellular location is the synaptosome. The enzyme catalyses L-glutamate(out) = L-glutamate(in). It catalyses the reaction 3 Na(+)(out) + phosphate(out) = 3 Na(+)(in) + phosphate(in). It carries out the reaction chloride(in) = chloride(out). The L-glutamate uniporter activity exhibits a biphasic dependence on chloride concentration. Chloride channel activity is allosterically activated by lumenal H(+) and Cl(-) leading to synaptic vesicles acidification. The glutamate transport activity is allosterically activated by lumenal H(+) and Cl(-), preventing non-vesicular L-glutamate release. In terms of biological role, multifunctional transporter that transports L-glutamate as well as multiple ions such as chloride, sodium and phosphate. At the synaptic vesicle membrane, mainly functions as an uniporter that mediates the uptake of L-glutamate into synaptic vesicles at presynaptic nerve terminals of excitatory neural cells. The L-glutamate uniporter activity is electrogenic and is driven by the proton electrochemical gradient, mainly by the electrical gradient established by the vacuolar H(+)-ATPase across the synaptic vesicle membrane. In addition, functions as a chloride channel that allows a chloride permeation through the synaptic vesicle membrane that affects the proton electrochemical gradient and promotes synaptic vesicles acidification. At the plasma membrane, following exocytosis, functions as a symporter of Na(+) and phosphate from the extracellular space to the cytoplasm allowing synaptic phosphate homeostasis regulation. The symporter activity is electrogenic. Moreover, operates synergistically with SLC18A3/VACHT under a constant H(+) gradient, thereby allowing striatal vesicular acetylcholine uptake. In Homo sapiens (Human), this protein is Vesicular glutamate transporter 3.